The following is a 318-amino-acid chain: Methionyl-tRNA formyltransferase (318 aa).

112 to 115 is a (6S)-5,6,7,8-tetrahydrofolate binding site; that stretch reads SLLP.

This sequence belongs to the Fmt family.

The enzyme catalyses L-methionyl-tRNA(fMet) + (6R)-10-formyltetrahydrofolate = N-formyl-L-methionyl-tRNA(fMet) + (6S)-5,6,7,8-tetrahydrofolate + H(+). Its function is as follows. Attaches a formyl group to the free amino group of methionyl-tRNA(fMet). The formyl group appears to play a dual role in the initiator identity of N-formylmethionyl-tRNA by promoting its recognition by IF2 and preventing the misappropriation of this tRNA by the elongation apparatus. The polypeptide is Methionyl-tRNA formyltransferase (Mycobacterium leprae (strain Br4923)).